The following is a 90-amino-acid chain: Probable Fe(2+)-trafficking protein (90 aa).

The protein belongs to the Fe(2+)-trafficking protein family.

Its function is as follows. Could be a mediator in iron transactions between iron acquisition and iron-requiring processes, such as synthesis and/or repair of Fe-S clusters in biosynthetic enzymes. The chain is Probable Fe(2+)-trafficking protein from Bordetella bronchiseptica (strain ATCC BAA-588 / NCTC 13252 / RB50) (Alcaligenes bronchisepticus).